We begin with the raw amino-acid sequence, 100 residues long: NADH-quinone oxidoreductase subunit K 2 (100 aa).

The next 3 helical transmembrane spans lie at 4–24 (LWWSILLGVALFVIGAGGVLL), 28–48 (ILIVLMSLELLLNSVNINFIA), and 60–80 (IFAIFVIAITAAEVAVALGIL).

This sequence belongs to the complex I subunit 4L family. As to quaternary structure, NDH-1 is composed of 14 different subunits. Subunits NuoA, H, J, K, L, M, N constitute the membrane sector of the complex.

It localises to the cell inner membrane. It carries out the reaction a quinone + NADH + 5 H(+)(in) = a quinol + NAD(+) + 4 H(+)(out). Functionally, NDH-1 shuttles electrons from NADH, via FMN and iron-sulfur (Fe-S) centers, to quinones in the respiratory chain. The immediate electron acceptor for the enzyme in this species is believed to be ubiquinone. Couples the redox reaction to proton translocation (for every two electrons transferred, four hydrogen ions are translocated across the cytoplasmic membrane), and thus conserves the redox energy in a proton gradient. The chain is NADH-quinone oxidoreductase subunit K 2 from Rhizobium meliloti (strain 1021) (Ensifer meliloti).